Reading from the N-terminus, the 159-residue chain is RNA pyrophosphohydrolase (159 aa).

A Nudix hydrolase domain is found at glycine 6 to lysine 149. The short motif at glycine 38–glycine 59 is the Nudix box element.

Belongs to the Nudix hydrolase family. RppH subfamily. The cofactor is a divalent metal cation.

Functionally, accelerates the degradation of transcripts by removing pyrophosphate from the 5'-end of triphosphorylated RNA, leading to a more labile monophosphorylated state that can stimulate subsequent ribonuclease cleavage. This Pseudomonas putida (strain ATCC 700007 / DSM 6899 / JCM 31910 / BCRC 17059 / LMG 24140 / F1) protein is RNA pyrophosphohydrolase.